The following is a 166-amino-acid chain: 16S rRNA aminocarboxypropyltransferase (166 aa).

Residues Thr-17, Ile-62, Leu-84, Tyr-99, and Ser-103 each coordinate S-adenosyl-L-methionine.

It belongs to the TDD superfamily. TSR3 family.

The protein resides in the cytoplasm. It catalyses the reaction an N(1)-methylpseudouridine in rRNA + S-adenosyl-L-methionine = N(1)-methyl-N(3)-[(3S)-3-amino-3-carboxypropyl]pseudouridine in rRNA + S-methyl-5'-thioadenosine + H(+). Functionally, aminocarboxypropyltransferase that catalyzes the aminocarboxypropyl transfer on pseudouridine corresponding to position 914 in M.jannaschii 16S rRNA. It constitutes the last step in biosynthesis of the hypermodified N1-methyl-N3-(3-amino-3-carboxypropyl) pseudouridine (m1acp3-Psi). In Saccharolobus islandicus (strain M.16.27) (Sulfolobus islandicus), this protein is 16S rRNA aminocarboxypropyltransferase.